A 172-amino-acid chain; its full sequence is MERAEKREFVASLNQVFQNTGSVVVATYAGLTVAQMNDLRSKMRAAGGSVKVAKNRLAKIALQGTPSEGIQALFQGQTLIAYSDDPVAAPKIASEFAKGNDNLVILGGAMGATALDAEGVKALASLPSLDELRAKIVGMIQTPATRIAQIVNAPAGQLARVVGAYARKDEAA.

Belongs to the universal ribosomal protein uL10 family. Part of the ribosomal stalk of the 50S ribosomal subunit. The N-terminus interacts with L11 and the large rRNA to form the base of the stalk. The C-terminus forms an elongated spine to which L12 dimers bind in a sequential fashion forming a multimeric L10(L12)X complex.

Forms part of the ribosomal stalk, playing a central role in the interaction of the ribosome with GTP-bound translation factors. The polypeptide is Large ribosomal subunit protein uL10 (Chelativorans sp. (strain BNC1)).